A 663-amino-acid chain; its full sequence is Transmembrane 9 superfamily member 2 (663 aa).

The signal sequence occupies residues 1–28 (MSARLPVLSPPRWPRLLLLSLLLLGAVP). Residues 29–300 (GPRRSGAFYL…LESMPHTHIQ (272 aa)) lie on the Lumenal side of the membrane. The helical transmembrane segment at 301–321 (WFSIMNSLVIVLFLSGMVAMI) threads the bilayer. The Cytoplasmic portion of the chain corresponds to 322-374 (MLRTLHKDIARYNQMDSTEDAQEEFGWKLVHGDIFRPPRKGMLLSVFLGSGTQ). A helical membrane pass occupies residues 375–395 (ILIMTFVTLFFACLGFLSPAN). The Lumenal segment spans residues 396-398 (RGA). Residues 399–419 (LMTCAVVLWVLLGTPAGYVAA) traverse the membrane as a helical segment. Topologically, residues 420 to 437 (RFYKSFGGEKWKTNVLLT) are cytoplasmic. The chain crosses the membrane as a helical span at residues 438 to 458 (SFLCPGIVFADFFIMNLILWG). Residues 459 to 466 (EGSSAAIP) lie on the Lumenal side of the membrane. A helical transmembrane segment spans residues 467 to 487 (FGTLVAILALWFCISVPLTFI). Topologically, residues 488–522 (GAYFGFKKNAIEHPVRTNQIPRQIPEQSFYTKPLP) are cytoplasmic. The helical transmembrane segment at 523–543 (GIIMGGILPFGCIFIQLFFIL) threads the bilayer. Residues 544-554 (NSIWSHQMYYM) are Lumenal-facing. A helical membrane pass occupies residues 555–575 (FGFLFLVFIILVITCSEATIL). Topologically, residues 576–591 (LCYFHLCAEDYHWQWR) are cytoplasmic. A helical transmembrane segment spans residues 592–612 (SFLTSGFTAVYFLIYAVHYFF). The Lumenal portion of the chain corresponds to 613-631 (SKLQITGTASTILYFGYTM). A helical membrane pass occupies residues 632–652 (IMVLIFFLFTGTIGFFACFWF). The Cytoplasmic portion of the chain corresponds to 653 to 663 (VTKIYSVVKVD).

The protein belongs to the nonaspanin (TM9SF) (TC 9.A.2) family. In terms of tissue distribution, ubiquitously expressed. Especially abundant in pancreas, highly expressed in kidney, lower levels in heart, brain, skeletal muscle and placenta. Lowest expression in lung and liver.

The protein localises to the endosome membrane. Its subcellular location is the golgi outpost. The protein resides in the cytoplasm. It is found in the cytoskeleton. It localises to the microtubule organizing center. In the intracellular compartments, may function as a channel or small molecule transporter. This is Transmembrane 9 superfamily member 2 (TM9SF2) from Homo sapiens (Human).